The following is a 501-amino-acid chain: Actin-binding protein WASF3 (501 aa).

Positions 57-93 form a coiled coil; it reads NEANNFYIRANSLQDRIDRLAVKVTQLDSTVEEVSLQ. At Tyr151 the chain carries Phosphotyrosine; by ABL1. Residues 162 to 206 are a coiled coil; sequence KEKMLQDTEDKRKEKRRQKEQKRVDGTTREVKKVRKARNRRQEWN. The interval 170-443 is disordered; that stretch reads EDKRKEKRRQ…PPISDARSDL (274 aa). The segment covering 182 to 192 has biased composition (basic and acidic residues); it reads QKRVDGTTREV. A compositionally biased stretch (polar residues) spans 219–237; sequence RLSQSVHHGASSEGSLSPD. At Tyr248 the chain carries Phosphotyrosine; by ABL1. The span at 256-267 shows a compositional bias: polar residues; it reads HALQAQPATPSY. A compositionally biased stretch (pro residues) spans 302-312; that stretch reads QQPPPPPPPQA. A Phosphotyrosine; by ABL1 modification is found at Tyr337. Pro residues-rich tracts occupy residues 341–352 and 394–410; these read SGPPPPPPPPMI and APPPPGPPPPPPGPPGP. Residues 411 to 422 show a composition bias toward low complexity; sequence SSLSSSPMHGPP. Residues 439–456 form the WH2 domain; the sequence is ARSDLLAAIRMGIQLKKV. Tyr485 carries the phosphotyrosine; by ABL1 modification.

The protein belongs to the SCAR/WAVE family. Binds actin and the Arp2/3 complex. In terms of processing, phosphorylation by ABL1 promotes lamellipodia formation and cell migration.

The protein localises to the cytoplasm. The protein resides in the cytoskeleton. Downstream effector molecules involved in the transmission of signals from tyrosine kinase receptors and small GTPases to the actin cytoskeleton. Plays a role in the regulation of cell morphology and cytoskeletal organization. Required in the control of cell shape. The chain is Actin-binding protein WASF3 (Wasf3) from Mus musculus (Mouse).